A 277-amino-acid chain; its full sequence is Thiazole synthase (277 aa).

Lys118 functions as the Schiff-base intermediate with DXP in the catalytic mechanism. 1-deoxy-D-xylulose 5-phosphate-binding positions include Gly179, 205 to 206, and 227 to 228; these read AG and NT.

The protein belongs to the ThiG family. As to quaternary structure, homotetramer. Forms heterodimers with either ThiH or ThiS.

The protein localises to the plastid. Its subcellular location is the chloroplast. The enzyme catalyses [ThiS sulfur-carrier protein]-C-terminal-Gly-aminoethanethioate + 2-iminoacetate + 1-deoxy-D-xylulose 5-phosphate = [ThiS sulfur-carrier protein]-C-terminal Gly-Gly + 2-[(2R,5Z)-2-carboxy-4-methylthiazol-5(2H)-ylidene]ethyl phosphate + 2 H2O + H(+). The protein operates within cofactor biosynthesis; thiamine diphosphate biosynthesis. In terms of biological role, catalyzes the rearrangement of 1-deoxy-D-xylulose 5-phosphate (DXP) to produce the thiazole phosphate moiety of thiamine. Sulfur is provided by the thiocarboxylate moiety of the carrier protein ThiS. In vitro, sulfur can be provided by H(2)S. This chain is Thiazole synthase, found in Emiliania huxleyi (Coccolithophore).